Reading from the N-terminus, the 370-residue chain is DNA replication and repair protein RecF (370 aa).

Residue 30 to 37 (GENAQGKT) participates in ATP binding.

This sequence belongs to the RecF family.

The protein localises to the cytoplasm. Functionally, the RecF protein is involved in DNA metabolism; it is required for DNA replication and normal SOS inducibility. RecF binds preferentially to single-stranded, linear DNA. It also seems to bind ATP. This chain is DNA replication and repair protein RecF, found in Listeria innocua serovar 6a (strain ATCC BAA-680 / CLIP 11262).